Reading from the N-terminus, the 396-residue chain is Gap junction gamma-1 protein (396 aa).

Residues 1-22 (MSWSFLTRLLEEIHNHSTFVGK) lie on the Cytoplasmic side of the membrane. Residues 23–45 (IWLTVLIVFRIVLTAVGGESIYY) traverse the membrane as a helical segment. Over 46 to 75 (DEQSKFVCNTEQPGCENVCYDAFAPLSHVR) the chain is Extracellular. The helical transmembrane segment at 76–95 (FWVFQIILVATPSVMYLGYA) threads the bilayer. Topologically, residues 96–175 (IHKIAKMEHG…RRIREDGLMK (80 aa)) are cytoplasmic. Residues 146-165 (LESEKENKDQNQSKPKHDGR) are disordered. The span at 147–156 (ESEKENKDQN) shows a compositional bias: basic and acidic residues. Residues 176–198 (IYVLQLLARTVFEVGFLVGQYFL) form a helical membrane-spanning segment. Over 199-228 (YGFQVHPFYVCSRLPCPHKIDCFISRPTEK) the chain is Extracellular. Residues 229 to 248 (TIFLLIMYGVTGLCLLLNIW) form a helical membrane-spanning segment. Residues 249-396 (EMLHLGFGTI…SGDGKTSVWI (148 aa)) are Cytoplasmic-facing. Residues 356–396 (YNHQNNPHGSREKKAKVGSKAGSNKSSASSKSGDGKTSVWI) are disordered. Positions 373–396 (GSKAGSNKSSASSKSGDGKTSVWI) are enriched in low complexity.

This sequence belongs to the connexin family. Gamma-type subfamily. In terms of assembly, a connexon is composed of a hexamer of connexins. Interacts with CNST.

It is found in the cell membrane. The protein resides in the cell junction. The protein localises to the gap junction. Functionally, one gap junction consists of a cluster of closely packed pairs of transmembrane channels, the connexons, through which materials of low MW diffuse from one cell to a neighboring cell. The chain is Gap junction gamma-1 protein (GJC1) from Bos taurus (Bovine).